A 251-amino-acid chain; its full sequence is Methionine aminopeptidase (251 aa).

Position 77 (His77) interacts with substrate. Positions 94, 105, and 169 each coordinate a divalent metal cation. A substrate-binding site is contributed by His176. Residues Glu202 and Glu233 each contribute to the a divalent metal cation site.

This sequence belongs to the peptidase M24A family. Methionine aminopeptidase type 1 subfamily. In terms of assembly, monomer. The cofactor is Co(2+). It depends on Zn(2+) as a cofactor. Mn(2+) is required as a cofactor. Requires Fe(2+) as cofactor.

The enzyme catalyses Release of N-terminal amino acids, preferentially methionine, from peptides and arylamides.. Functionally, removes the N-terminal methionine from nascent proteins. The N-terminal methionine is often cleaved when the second residue in the primary sequence is small and uncharged (Met-Ala-, Cys, Gly, Pro, Ser, Thr, or Val). Requires deformylation of the N(alpha)-formylated initiator methionine before it can be hydrolyzed. The polypeptide is Methionine aminopeptidase (Mycoplasma capricolum subsp. capricolum (strain California kid / ATCC 27343 / NCTC 10154)).